The primary structure comprises 408 residues: Arylacetamide deacetylase-like 3 (408 aa).

Helical transmembrane passes span 2-22, 46-66, and 109-129; these read VVLA…GSLL, ILSC…KLGL, and SSIP…IGSL. The short motif at 120–122 is the Involved in the stabilization of the negatively charged intermediate by the formation of the oxyanion hole element; that stretch reads HGG. The active site involves serine 194. N-linked (GlcNAc...) asparagine glycosylation occurs at asparagine 321. Catalysis depends on residues aspartate 348 and histidine 378.

Belongs to the 'GDXG' lipolytic enzyme family.

The protein resides in the membrane. The protein is Arylacetamide deacetylase-like 3 (Aadacl3) of Mus musculus (Mouse).